The primary structure comprises 202 residues: Osteoclast-stimulating factor 1 (202 aa).

The SH3 domain maps to 12 to 71; it reads GQVKVFRALYTFEPRTPDELYFEEGDIIYISDMSDTNWWKGTCKGRTGLIPSNYVAEQAE. ANK repeat units lie at residues 72 to 101, 105 to 135, and 139 to 168; these read SIDN…GVNG, AGNT…ELNQ, and LGDT…RTDL.

The protein localises to the cytoplasm. Its function is as follows. Induces bone resorption, acting probably through a signaling cascade which results in the secretion of factor(s) enhancing osteoclast formation and activity. This chain is Osteoclast-stimulating factor 1 (OSTF1), found in Gallus gallus (Chicken).